Consider the following 445-residue polypeptide: Phosphoglucosamine mutase (445 aa).

The active-site Phosphoserine intermediate is Ser102. Residues Ser102, Asp241, Asp243, and Asp245 each coordinate Mg(2+). The residue at position 102 (Ser102) is a Phosphoserine.

The protein belongs to the phosphohexose mutase family. Requires Mg(2+) as cofactor. Post-translationally, activated by phosphorylation.

It catalyses the reaction alpha-D-glucosamine 1-phosphate = D-glucosamine 6-phosphate. Its function is as follows. Catalyzes the conversion of glucosamine-6-phosphate to glucosamine-1-phosphate. This Shewanella sp. (strain W3-18-1) protein is Phosphoglucosamine mutase.